The primary structure comprises 297 residues: Protoheme IX farnesyltransferase (297 aa).

A run of 8 helical transmembrane segments spans residues 15–35 (VVAL…PAPY), 39–59 (GLLV…AAVF), 91–111 (VWGV…VNII), 112–132 (TVVL…LYLK), 139–159 (IVIG…AVSG), 166–186 (ACLL…ALAI), 220–240 (LLLV…YLVI), and 265–285 (AWST…ALLF).

Belongs to the UbiA prenyltransferase family. Protoheme IX farnesyltransferase subfamily.

It localises to the cell inner membrane. The catalysed reaction is heme b + (2E,6E)-farnesyl diphosphate + H2O = Fe(II)-heme o + diphosphate. Its pathway is porphyrin-containing compound metabolism; heme O biosynthesis; heme O from protoheme: step 1/1. In terms of biological role, converts heme B (protoheme IX) to heme O by substitution of the vinyl group on carbon 2 of heme B porphyrin ring with a hydroxyethyl farnesyl side group. This Vesicomyosocius okutanii subsp. Calyptogena okutanii (strain HA) protein is Protoheme IX farnesyltransferase.